We begin with the raw amino-acid sequence, 374 residues long: Layilin (374 aa).

The signal sequence occupies residues 1 to 24 (MQPGPALQAVLLAVLLSEPRSSKG). The Extracellular segment spans residues 25 to 221 (RLLSGQLVCR…TKETFKESRE (197 aa)). A C-type lectin domain is found at 37–177 (TRRPCYKVIY…CNMKNNFICK (141 aa)). Intrachain disulfides connect Cys63-Cys176 and Cys142-Cys168. Asn109 carries N-linked (GlcNAc...) asparagine glycosylation. The interval 184-212 (STTPSIRPGGEATEPPTPVLPEETQKEDT) is disordered. The helical transmembrane segment at 222–242 (AALNLAYILIPSIPLFLLLVV) threads the bilayer. Topologically, residues 243 to 374 (TSAACWVWIC…SGWVENEIYY (132 aa)) are cytoplasmic. Residues Ser279 and Ser292 each carry the phosphoserine modification. The segment at 323-367 (DYDNMAVNPSESGFVTLASMESGFVTNDIYEFSPDRMGRSKESGW) is interaction with NF2. Positions 330 to 374 (NPSESGFVTLASMESGFVTNDIYEFSPDRMGRSKESGWVENEIYY) are interaction with TLN1. 5 tandem repeats follow at residues 333–337 (ESGFV), 343–347 (ESGFV), 349–352 (NDIY), 364–368 (ESGWV), and 370–373 (NEIY). Residues 333–368 (ESGFVTLASMESGFVTNDIYEFSPDRMGRSKESGWV) form a 3 X 5 AA repeats of E-S-G-X-V region. The tract at residues 349–373 (NDIYEFSPDRMGRSKESGWVENEIY) is 2 X 4 AA repeats of N-X-I-Y.

In terms of assembly, interacts with NF2 and RDX. Interacts with TLN1. As to expression, widely expressed. Abundant in the ovary.

The protein localises to the membrane. In terms of biological role, receptor for hyaluronate. The chain is Layilin (LAYN) from Cricetulus griseus (Chinese hamster).